A 496-amino-acid chain; its full sequence is NAD(P)H-quinone oxidoreductase subunit 2, chloroplastic (496 aa).

The next 14 helical transmembrane spans lie at serine 14 to valine 34, methionine 42 to tryptophan 62, phenylalanine 79 to phenylalanine 99, leucine 109 to alanine 129, isoleucine 133 to valine 153, leucine 167 to leucine 187, leucine 210 to valine 230, proline 244 to isoleucine 264, isoleucine 281 to threonine 301, arginine 305 to glycine 325, leucine 334 to phenylalanine 354, alanine 377 to phenylalanine 397, isoleucine 400 to phenylalanine 420, and isoleucine 469 to phenylalanine 489.

This sequence belongs to the complex I subunit 2 family. As to quaternary structure, NDH is composed of at least 16 different subunits, 5 of which are encoded in the nucleus.

The protein resides in the plastid. Its subcellular location is the chloroplast thylakoid membrane. The enzyme catalyses a plastoquinone + NADH + (n+1) H(+)(in) = a plastoquinol + NAD(+) + n H(+)(out). It carries out the reaction a plastoquinone + NADPH + (n+1) H(+)(in) = a plastoquinol + NADP(+) + n H(+)(out). NDH shuttles electrons from NAD(P)H:plastoquinone, via FMN and iron-sulfur (Fe-S) centers, to quinones in the photosynthetic chain and possibly in a chloroplast respiratory chain. The immediate electron acceptor for the enzyme in this species is believed to be plastoquinone. Couples the redox reaction to proton translocation, and thus conserves the redox energy in a proton gradient. The protein is NAD(P)H-quinone oxidoreductase subunit 2, chloroplastic of Chara vulgaris (Common stonewort).